Here is a 165-residue protein sequence, read N- to C-terminus: Immunity protein YokJ (165 aa).

As to quaternary structure, probably interacts with cognate toxin YokI but not with other non-cognate toxins. The interaction inhibits the toxic activity of YokI.

It is found in the cytoplasm. Functionally, immunity component of one of 6 LXG toxin-immunity modules in this strain. They promote kin selection, mediate competition in biofilms, and drive spatial segregation of different strains, indicating that LXG toxins may help avoid warfare between strains in biofilms. Mediates intercellular competition during biofilm formation; disruption of the operon disadvantages the bacteria, but overexpression of the cognate immunity protein restores growth in competition with wild-type. In situ neutralizes the toxic effect of cognate toxin YokI. Neutralizes the ability to inhibit growth of cognate toxin YokI upon expression in E.coli. Does not have immunity protein activity on other LXG toxins. This is Immunity protein YokJ (yokJ) from Bacillus subtilis (strain 168).